A 174-amino-acid polypeptide reads, in one-letter code: DNA-directed RNA polymerase IV subunit 7 (174 aa).

This sequence belongs to the eukaryotic RPB7/RPC8 RNA polymerase subunit family. As to quaternary structure, component of the RNA polymerase IV complex. Interacts with NRPD1.

The protein resides in the nucleus. DNA-dependent RNA polymerase catalyzes the transcription of DNA into RNA using the four ribonucleoside triphosphates as substrates. Component of RNA polymerase IV which mediates 24-nt short-interfering RNAs (siRNA) accumulation. Implicated in siRNA-directed heterochromatin formation through the action of DCL3 and AGO4, and subsequent DNA methylation-dependent silencing of targeted sequences. Essential component of a self-reinforcing loop coupling de novo DNA methylation to siRNA production. Required for intercellular but not intracellular RNA interference (RNAi) leading to systemic post-transcriptional gene silencing. Involved in the maintenance of post-transcriptional RNA silencing. The sequence is that of DNA-directed RNA polymerase IV subunit 7 (NRPD7) from Arabidopsis thaliana (Mouse-ear cress).